A 387-amino-acid chain; its full sequence is EARP-interacting protein homolog (387 aa).

WD repeat units lie at residues 132-172 (SAHG…AKAT), 182-222 (KGQL…QIYC), 226-266 (AHGQ…EPVK), and 270-310 (EHSH…SEPF). The interval 309–337 (PFGHLVDDDDLSDPEENQQEDKGKEPLQD) is disordered. Positions 315 to 326 (DDDDLSDPEENQ) are enriched in acidic residues. Residues 345–385 (EHEDSVYAVEWSAADPWLFASLSYDGRLVINRVPRALKYRI) form a WD 5 repeat.

The protein belongs to the WD repeat EIPR1 family.

It is found in the golgi apparatus. The protein resides in the trans-Golgi network. May act as a component of endosomal retrieval machinery that is involved in protein transport from early endosomes to either recycling endosomes or the trans-Golgi network. This chain is EARP-interacting protein homolog, found in Danio rerio (Zebrafish).